Consider the following 149-residue polypeptide: L-alanine exporter AlaE (149 aa).

4 consecutive transmembrane segments (helical) span residues 16 to 36 (FAMV…LSGM), 46 to 66 (LVAI…RDLF), 85 to 105 (ILAY…VVGA), and 112 to 132 (AAVS…GYFL).

It belongs to the AlaE exporter family.

It localises to the cell inner membrane. Exports L-alanine. The protein is L-alanine exporter AlaE of Shigella flexneri.